Here is a 504-residue protein sequence, read N- to C-terminus: MNVFFMFSLLFLATLGSCADDKNPLEECFREDDYEEFLEIAKNGLKKTSNPKHIVIVGAGMSGLSAAYVLAGAGHKVTVLEASERPGGRVRTHRNVKEGWYANLGPMRVPEKHRIIREYIRKFGLKLNEFVQETENGWYFIKNIRKRVGEVKKDPGLLKYPVKPSEAGKSAGQLYQESLGKAVEELKRTNCSYILNKYDTYSTKEYLIKEGNLSPGAVDMIGDLLNEDSGYYVSFIESLKHDDIFAYEKRFDEIVGGMDQLPTSMYRAIEESVHFKARVIKIQQNAEKVTVTYQTTQKNLLLETADYVIVCTTSRAARRITFKPPLPPKKAHALRSVHYRSGTKIFLTCTKKFWEDDGIQGGKSTTDLPSRFIYYPNHNFTTGVGVIIAYGIGDDANFFQALNLNECADIVFNDLSSIHQLPKKDLQTFCYPSIIQKWSLDKYAMGAITTFTPYQFQHFSEALTAPVGRIFFAGEYTANAHGWIDSTIKSGLTAARDVNRASEL.

The signal sequence occupies residues M1–C18. The cysteines at positions 28 and 191 are disulfide-linked. FAD is bound by residues M61–S62, E81–A82, R89, and G105–R108. R108 lines the substrate pocket. N-linked (GlcNAc...) asparagine glycosylation is present at N190. H241 serves as a coordination point for substrate. V279 provides a ligand contact to FAD. C349 and C430 are disulfide-bonded. N379 carries N-linked (GlcNAc...) asparagine glycosylation. A substrate-binding site is contributed by Y390. Residues E475 and G482–T487 each bind FAD. Position 482–483 (G482–W483) interacts with substrate.

It belongs to the flavin monoamine oxidase family. FIG1 subfamily. Homodimer; non-covalently linked. It depends on FAD as a cofactor. Expressed by the venom gland.

It is found in the secreted. The enzyme catalyses an L-alpha-amino acid + O2 + H2O = a 2-oxocarboxylate + H2O2 + NH4(+). It catalyses the reaction L-leucine + O2 + H2O = 4-methyl-2-oxopentanoate + H2O2 + NH4(+). The catalysed reaction is L-phenylalanine + O2 + H2O = 3-phenylpyruvate + H2O2 + NH4(+). It carries out the reaction L-tryptophan + O2 + H2O = indole-3-pyruvate + H2O2 + NH4(+). The enzyme catalyses L-methionine + O2 + H2O = 4-methylsulfanyl-2-oxobutanoate + H2O2 + NH4(+). It catalyses the reaction L-tyrosine + O2 + H2O = 3-(4-hydroxyphenyl)pyruvate + H2O2 + NH4(+). Its function is as follows. Catalyzes an oxidative deamination of predominantly hydrophobic and aromatic L-amino acids, thus producing hydrogen peroxide that may contribute to the diverse toxic effects of this enzyme. Is highly active on L-Tyr followed by L-Phe, L-Met, L-Leu, L-Trp, and weakly active on L-Ile, L-Arg, L-Val, L-Lys, and L-Ala. Inhibits ADP- and collagen-induced platelet aggregation. This inhibition is inhibited by catalase, indicating the importance of generated H(2)O(2) for the inhibitory effect. This effect on platelets among snake L-amino-acid oxidases is however controversial, since some of them induce aggregation, whereas the other inhibit agonist-induced aggregation. In vivo, this enzyme induces a rapid, substantial and reversible increase in the paw volume of mice (edema). In addition, myofibrosis, and inflammatory cell infiltration on the paw tissue are also observed. The polypeptide is L-amino-acid oxidase (Daboia russelii (Russel's viper)).